Reading from the N-terminus, the 290-residue chain is Virginiamycin B lyase (290 aa).

Position 226 (histidine 226) interacts with substrate. Glutamate 265 is a binding site for Mg(2+). Residue histidine 267 is the Proton acceptor of the active site. Mg(2+) is bound at residue glutamate 282.

The protein belongs to the Vgb family. Monomer. Mg(2+) is required as a cofactor.

Functionally, inactivates the type B streptogramin antibiotics by linearizing the lactone ring at the ester linkage, generating a free phenylglycine carboxylate and converting the threonyl moiety into 2-amino-butenoic acid. This is Virginiamycin B lyase from Mycolicibacterium vanbaalenii (strain DSM 7251 / JCM 13017 / BCRC 16820 / KCTC 9966 / NRRL B-24157 / PYR-1) (Mycobacterium vanbaalenii).